Consider the following 364-residue polypeptide: Chorismate synthase (364 aa).

NADP(+) is bound by residues Arg48 and Arg54. FMN is bound by residues 125–127, Gly282, 297–301, and Arg323; these read RSS and KPPAS.

Belongs to the chorismate synthase family. As to quaternary structure, homotetramer. Requires FMNH2 as cofactor.

It carries out the reaction 5-O-(1-carboxyvinyl)-3-phosphoshikimate = chorismate + phosphate. It functions in the pathway metabolic intermediate biosynthesis; chorismate biosynthesis; chorismate from D-erythrose 4-phosphate and phosphoenolpyruvate: step 7/7. Catalyzes the anti-1,4-elimination of the C-3 phosphate and the C-6 proR hydrogen from 5-enolpyruvylshikimate-3-phosphate (EPSP) to yield chorismate, which is the branch point compound that serves as the starting substrate for the three terminal pathways of aromatic amino acid biosynthesis. This reaction introduces a second double bond into the aromatic ring system. This Chloroflexus aurantiacus (strain ATCC 29366 / DSM 635 / J-10-fl) protein is Chorismate synthase.